A 234-amino-acid chain; its full sequence is Probable GTP-binding protein EngB (234 aa).

Residues 23-209 (AVPEVAFAGR…QRTVAGWLCL (187 aa)) form the EngB-type G domain. Residues 31-38 (GRSNAGKS), 58-62 (GRTQH), 82-85 (DLPG), 149-152 (TKAD), and 187-190 (LFSS) each bind GTP. Mg(2+) is bound by residues serine 38 and threonine 60. A disordered region spans residues 210-234 (PEAMPPSPDAEPAKKTPSPDAQRGE).

Belongs to the TRAFAC class TrmE-Era-EngA-EngB-Septin-like GTPase superfamily. EngB GTPase family. The cofactor is Mg(2+).

Its function is as follows. Necessary for normal cell division and for the maintenance of normal septation. The chain is Probable GTP-binding protein EngB from Ralstonia nicotianae (strain ATCC BAA-1114 / GMI1000) (Ralstonia solanacearum).